The chain runs to 310 residues: 4-hydroxy-3-methylbut-2-enyl diphosphate reductase (310 aa).

Cys-13 contacts [4Fe-4S] cluster. (2E)-4-hydroxy-3-methylbut-2-enyl diphosphate contacts are provided by His-42 and His-75. Dimethylallyl diphosphate contacts are provided by His-42 and His-75. Isopentenyl diphosphate-binding residues include His-42 and His-75. Cys-97 lines the [4Fe-4S] cluster pocket. Position 125 (His-125) interacts with (2E)-4-hydroxy-3-methylbut-2-enyl diphosphate. His-125 lines the dimethylallyl diphosphate pocket. Residue His-125 participates in isopentenyl diphosphate binding. Residue Glu-127 is the Proton donor of the active site. Thr-165 is a binding site for (2E)-4-hydroxy-3-methylbut-2-enyl diphosphate. Cys-195 is a binding site for [4Fe-4S] cluster. (2E)-4-hydroxy-3-methylbut-2-enyl diphosphate-binding residues include Ser-223, Ser-224, Asn-225, and Ser-267. The dimethylallyl diphosphate site is built by Ser-223, Ser-224, Asn-225, and Ser-267. Isopentenyl diphosphate contacts are provided by Ser-223, Ser-224, Asn-225, and Ser-267.

This sequence belongs to the IspH family. Requires [4Fe-4S] cluster as cofactor.

The catalysed reaction is isopentenyl diphosphate + 2 oxidized [2Fe-2S]-[ferredoxin] + H2O = (2E)-4-hydroxy-3-methylbut-2-enyl diphosphate + 2 reduced [2Fe-2S]-[ferredoxin] + 2 H(+). It catalyses the reaction dimethylallyl diphosphate + 2 oxidized [2Fe-2S]-[ferredoxin] + H2O = (2E)-4-hydroxy-3-methylbut-2-enyl diphosphate + 2 reduced [2Fe-2S]-[ferredoxin] + 2 H(+). It participates in isoprenoid biosynthesis; dimethylallyl diphosphate biosynthesis; dimethylallyl diphosphate from (2E)-4-hydroxy-3-methylbutenyl diphosphate: step 1/1. It functions in the pathway isoprenoid biosynthesis; isopentenyl diphosphate biosynthesis via DXP pathway; isopentenyl diphosphate from 1-deoxy-D-xylulose 5-phosphate: step 6/6. Functionally, catalyzes the conversion of 1-hydroxy-2-methyl-2-(E)-butenyl 4-diphosphate (HMBPP) into a mixture of isopentenyl diphosphate (IPP) and dimethylallyl diphosphate (DMAPP). Acts in the terminal step of the DOXP/MEP pathway for isoprenoid precursor biosynthesis. The protein is 4-hydroxy-3-methylbut-2-enyl diphosphate reductase of Chlamydia pneumoniae (Chlamydophila pneumoniae).